A 163-amino-acid chain; its full sequence is Gas vesicle protein H2 (163 aa).

Residues 57 to 92 form a disordered region; sequence LGSDARSPSTPAGNADDAGDAETAHIETRASDDSDD. Basic and acidic residues predominate over residues 78–88; sequence ETAHIETRASD.

This sequence belongs to the gas vesicle GvpH family. In terms of assembly, gvpF to GvpM interact with each other in vitro, and may form multi-subunit complex(es). Interacts with GvpC. Might interact with GvpA.

The protein localises to the gas vesicle. Its subcellular location is the cytoplasm. In terms of biological role, a minor component of the gas vesicle, also found in soluble extracts. Proteins GvpF to GvpM might be involved in nucleating gas vesicle formation. Gas vesicles are hollow, gas filled proteinaceous nanostructures found in several microbial planktonic microorganisms. They allow positioning of halobacteria at the optimal depth for growth in the poorly aerated, shallow brine pools of their habitat. Expression of 2 c-vac DNA fragments containing 2 divergently transcribed regions (gvpE-gvpF-gvpG-gvpH-gvpI-gvpJ-gvpK-gvpL-gvpM and gvpA-gvpC-gvpN-gvpO) allows H.volcanii to produce gas vesicles. This chain is Gas vesicle protein H2, found in Halobacterium salinarum (strain ATCC 700922 / JCM 11081 / NRC-1) (Halobacterium halobium).